The chain runs to 187 residues: Large ribosomal subunit protein bL17 (187 aa).

The tract at residues 122 to 187 (PKVRSSRTST…EADAAEKSDK (66 aa)) is disordered. Positions 127–144 (SRTSTATAPVAAAPVAEA) are enriched in low complexity. The segment covering 145 to 157 (PAEESDVPVEETD) has biased composition (acidic residues). Residues 167 to 176 (AETTDAAAAE) are compositionally biased toward low complexity.

It belongs to the bacterial ribosomal protein bL17 family. In terms of assembly, part of the 50S ribosomal subunit. Contacts protein L32.

The chain is Large ribosomal subunit protein bL17 from Clavibacter sepedonicus (Clavibacter michiganensis subsp. sepedonicus).